The following is a 702-amino-acid chain: MNSLFASTARGLEELLKTELENLGAVECQVVQGGVHFKGDTRLVYQSLMWSRLASRIMLPLGECKVYSDLDLYLGVQAINWTEMFNPGATFAVHFSGLNDTIRNSQYGAMKVKDAIVDAFTRKNLPRPNVDRDAPDIRVNVWLHKETASIALDLSGDGLHLRGYRDRAGMAPIKETLAAAIVMRSGWQPGTPLLDPMCGSGTLLIEAAMLATDRAPGLHRGRWGFSGWTQHDEAIWQEVKAEAQTRARKGLAEYSSHFFGSDSDARVIQRARTNARLAGIGELITFEVNDVAQLANPLPKGPYGTVLSNPPYGERLDSEPALIALHSLLGRIMKNQFGGWNLSLFSASPDLLSCLQLRADKQYKAKNGPLDCVQKNYHVAESTPDSKPVMAAEDYANRLRKNLKKFEKWARQEGIECYRLYDADLPEYNVAVDRYADWVVVQEYAPPKTIDAHKARQRLFDIIAATISVLGIAPNKLVLKTRERQKGKNQYQKLGEKGEFLEVTEYNAHLWVNLTDYLDTGLFLDHRIARRMLGQMSKGKDFLNLFSYTGSATVHAGLGGARSTTTVDMSRTYLEWAERNLRLNGLTGRAHRLIQADCLAWLREANEQFDLIFIDPPTFSNSKRMEDAFDVQRDHLALMKDLKRLLRAGGTIMFSNNKRGFRMDLDGLAKLGLKAQEITQKTLSQDFARNRQIHNCWLITAA.

The region spanning 43 to 154 is the THUMP domain; sequence LVYQSLMWSR…KETASIALDL (112 aa).

It belongs to the methyltransferase superfamily. RlmKL family.

The protein resides in the cytoplasm. It carries out the reaction guanosine(2445) in 23S rRNA + S-adenosyl-L-methionine = N(2)-methylguanosine(2445) in 23S rRNA + S-adenosyl-L-homocysteine + H(+). The enzyme catalyses guanosine(2069) in 23S rRNA + S-adenosyl-L-methionine = N(2)-methylguanosine(2069) in 23S rRNA + S-adenosyl-L-homocysteine + H(+). Specifically methylates the guanine in position 2445 (m2G2445) and the guanine in position 2069 (m7G2069) of 23S rRNA. The chain is Ribosomal RNA large subunit methyltransferase K/L from Escherichia coli O1:K1 / APEC.